The following is a 522-amino-acid chain: E3 ubiquitin-protein ligase DMA2 (522 aa).

Disordered regions lie at residues 1-56 and 69-92; these read MYTP…RPAS and QNSQ…PSNS. Residues 14-35 show a composition bias toward low complexity; sequence APTSSMTSNSSSASNANTTSSS. Polar residues predominate over residues 36-49; it reads GINPRNRASGTPSN. Ser206 is subject to Phosphoserine. Residues Lys211, Lys256, Lys258, Lys288, Lys310, Lys333, Lys343, Lys346, Lys366, Lys406, Lys412, and Lys423 each participate in a glycyl lysine isopeptide (Lys-Gly) (interchain with G-Cter in ubiquitin) cross-link. One can recognise an FHA domain in the interval 295–358; it reads LVIGRYTERV…SGTFLNHQRL (64 aa). The segment at 433 to 477 adopts an RING-type zinc-finger fold; it reads CSICLCKIKPCQAIFISPCAHSWHFRCVRRLVMLSYPQFVCPNCR.

The protein belongs to the DMA1 family. In terms of processing, UBC4-dependent autoubiquitination occurs at Lys-211, Lys-258, Lys-288, Lys-310, Lys-333, Lys-343, Lys-346, Lys-366, Lys-406, Lys-412 and Lys-423. UBC4-dependent autoubiquitination is responsible for DMA2 turnover. UBC13/MMS2-dependent autoubiquitination occurs at Lys-258, Lys-310, Lys-346 and Lys-366. Lys-211, Lys-256, Lys-288, Lys-310, Lys-343, Lys-258, Lys-366 and Lys-412 are also ubiquitinated in trans by DMA1 E3 ligase in association with UBC4.

It localises to the cytoplasm. The catalysed reaction is S-ubiquitinyl-[E2 ubiquitin-conjugating enzyme]-L-cysteine + [acceptor protein]-L-lysine = [E2 ubiquitin-conjugating enzyme]-L-cysteine + N(6)-ubiquitinyl-[acceptor protein]-L-lysine.. Functionally, E3 ubiquitin-protein ligase which functions in cell cycle retarding in conjunction with the UBC4 and UBC13/MMS2 complex, 2 E2 ubiquitin conjugating enzymes. Involved in nutritional control of the cell cycle. Required for proper spindle positioning, likely regulating septin ring deposition at the bud neck. The polypeptide is E3 ubiquitin-protein ligase DMA2 (DMA2) (Saccharomyces cerevisiae (strain ATCC 204508 / S288c) (Baker's yeast)).